We begin with the raw amino-acid sequence, 522 residues long: MELVLNSTTIGVGVVSLILLLYLFLRGGSWKSGEEGPPTVAGAWPIIGHLPLLLGSKTPHKTLGDLADKYGPIFSIKIGAKNAVVVSNWEMAKECYTTNDIAVSSLPDLISANLLCYNRSMIVVAPYGPYWRQLRKILMSEFLSPSRVEQLHHVRVSEVQSSITELFRDWRSNKNVQSGFATVELKQWFSLLVFNMILRMVCGKRYFSASTSDDEKANRCVKAVDEFVRLAATFTVGDAIPYLRWFDFGGYENDMRETGKELDEIIGEWLDEHRQKRKMGENVQDLMSVLLSLLEGKTIEGMNVDIVIKSFVLTVIQAGTEASITTLIWATSLILNNPSVLEKLKAELDIQVGKERYICESDLSKLTYLQAVVKETLRLYPPAPLSRPREFEEDCTIGGYTVKKGTRLITNLSKIHTDHNVWSNPLEFKPERFLTTDKDIDMKGQHFQLLPFGGGRRICPGINLGLQTVRLTLASFLHSFEILNPSTEPLDMTEVFRATNTKATPLEILIKPRLSPSCYESI.

Cys459 is a heme binding site.

It belongs to the cytochrome P450 family. Heme is required as a cofactor.

Its subcellular location is the membrane. The polypeptide is Cytochrome P450 82A2 (CYP82A2) (Glycine max (Soybean)).